A 921-amino-acid chain; its full sequence is MASAATVAAAGRALRRAVLLLRRGYQTERGVYGYRPRKAKSGEPRGDRARPSVDHGLARLVTVYCEHGHKAAQINPLFPGQALLDTVPEIQALVRTLQGPFTTTGLLNLGKEAASLEEVLAYLNHIYCGPISIETAQLQSQEERDWFARRFEELKKETFTTEERKYLSKLLLESQEFDHFLATKFATVKRYGGEGAESMMGFFHELLKLSAYGGITDIIIGMPHRGRLNLLTGLLQLPPELMFRKMRGLSEFPENVATIGDVLSHLTSSVDLDFGAHQPLHVTMLPNPSHLEAVNPVAVGKTRGRQQSREDGDYSPNGSAQPGDKVICLQVHGDASFCGQGIVLETFTLSNLPHFRIGGSIHLIVNNQLGYTTPAERGRSSLYSSDIGKLVGCAIIHVNGDSPEEVVRATRLAFEYQRQFRKDVIVDLLCYRQWGHNELDEPFFTNPVMYKIIRARKSIPDTYAEHLIASGLMTQEEVSDIKTSYYTKLNDHLANVAHYSPPATNLQARWQGLVQPEACVTTWDTGVPLELLRFIGVKSVEVPEELQVHSHLLKMYVQSRMEKVKNGSGLDWATAETLALGSLLAQGFNVRLSGQDVGRGTFSQRHAMVVCQDTDDAYIPLNHMDPNQKGFLEVSNSPLSEEAVLGFEYGMSIESPTLLPLWEAQFGDFFNGAQIIFDTFISGGEAKWLLQSGLVILLPHGYDGAGPEHSSCRIERFLQMCDSAEEGVDSDTVNMFVVHPTTPAQYFHLLRRQMIRNFRKPLIVASPKMLLRYPAAVSTLEEMAPGTAFKPVIGDSSVDPKNVKTLIFCSGKHFYALLKQRESLGTKKHDFAIIRLEELCPFPLDALQQEMSKYKHVRDVIWSQEEPQNMGPWSFVSPRFEKQLACRLRLVSRPPLPAPAVGIGTVHQQQHEDILSKTFTQ.

Lys-184 and Lys-189 each carry N6-succinyllysine. Residues 300–319 form a disordered region; that stretch reads GKTRGRQQSREDGDYSPNGS. Lys-801 and Lys-819 each carry N6-succinyllysine.

It belongs to the alpha-ketoglutarate dehydrogenase family. As to quaternary structure, the 2-oxoadipate dehydrogenase complex is composed of OADH (2-oxoadipate dehydrogenase; E1a), DLST (dihydrolipoamide succinyltransferase; E2) and DLD (dihydrolipoamide dehydrogenase; E3). E1a functional unit is a dimer. Requires thiamine diphosphate as cofactor.

It localises to the mitochondrion. It catalyses the reaction N(6)-[(R)-lipoyl]-L-lysyl-[protein] + 2-oxoadipate + H(+) = N(6)-[(R)-S(8)-glutaryldihydrolipoyl]-L-lysyl-[protein] + CO2. Its pathway is amino-acid degradation. Its function is as follows. 2-oxoadipate dehydrogenase (E1a) component of the 2-oxoadipate dehydrogenase complex (OADHC). Participates in the first step, rate limiting for the overall conversion of 2-oxoadipate (alpha-ketoadipate) to glutaryl-CoA and CO(2) catalyzed by the whole OADHC. Catalyzes the irreversible decarboxylation of 2-oxoadipate via the thiamine diphosphate (ThDP) cofactor and subsequent transfer of the decarboxylated acyl intermediate on an oxidized dihydrolipoyl group that is covalently amidated to the E2 enzyme (dihydrolipoyllysine-residue succinyltransferase or DLST). Can catalyze the decarboxylation of 2-oxoglutarate in vitro, but at a much lower rate than 2-oxoadipate. Responsible for the last step of L-lysine, L-hydroxylysine and L-tryptophan catabolism with the common product being 2-oxoadipate. The chain is 2-oxoadipate dehydrogenase complex component E1 (Dhtkd1) from Mus musculus (Mouse).